An 86-amino-acid polypeptide reads, in one-letter code: RNA-binding protein Hfq (86 aa).

One can recognise a Sm domain in the interval D9–I68.

The protein belongs to the Hfq family. Homohexamer.

Functionally, RNA chaperone that binds small regulatory RNA (sRNAs) and mRNAs to facilitate mRNA translational regulation in response to envelope stress, environmental stress and changes in metabolite concentrations. Also binds with high specificity to tRNAs. The protein is RNA-binding protein Hfq of Pseudomonas fluorescens (strain ATCC BAA-477 / NRRL B-23932 / Pf-5).